The primary structure comprises 306 residues: Arginase (306 aa).

4 residues coordinate Mn(2+): H96, D123, H125, and D127. Substrate is bound by residues 125–129, 136–138, and D178; these read HTDFH and SGN. D226 and D228 together coordinate Mn(2+). Positions 240 and 271 each coordinate substrate.

The protein belongs to the arginase family. Requires Mn(2+) as cofactor.

The enzyme catalyses L-arginine + H2O = urea + L-ornithine. It participates in nitrogen metabolism; urea cycle; L-ornithine and urea from L-arginine: step 1/1. This Brucella abortus biovar 1 (strain 9-941) protein is Arginase (arcB).